We begin with the raw amino-acid sequence, 352 residues long: MTSTTITPHHIGGAWTRTERRRLASVVGAIVILHVLGVALYLGYSGNPAAAGGLAGSGVLAYVLGVRHAFDADHIAAIDDTTRLMLLRGRRPVGVGFFFAMGHSTVVVVLALVVALGASALTTTELEGVQEIGGLVATVVAVTFLSIVAGLNSVVLRNLLCLSRQVRAGSDITGDLESRLSERGLFTRLLGNRWRGLVRSSWHMYPVGLLMGLGLETASEVTLLTLTASAATGGTLSIAAVLSLPLLFAAGMSTFDTADSLFMTRAYSWSYQDPQRRLNFNIATTGATVVIGLFVAGIYVCALLAHLPMFAALSPIGDISENFEFLGYAVAAAFILTWTGALLFNHLKPQRN.

The next 8 membrane-spanning stretches (helical) occupy residues 23-43, 46-66, 95-115, 131-151, 206-226, 230-250, 290-310, and 323-343; these read LASVVGAIVILHVLGVALYLG, GNPAAAGGLAGSGVLAYVLGV, VGFFFAMGHSTVVVVLALVVA, EIGGLVATVVAVTFLSIVAGL, PVGLLMGLGLETASEVTLLTL, AATGGTLSIAAVLSLPLLFAA, VIGLFVAGIYVCALLAHLPMF, and FEFLGYAVAAAFILTWTGALL.

It belongs to the NiCoT transporter (TC 2.A.52) family.

The protein localises to the cell membrane. Its activity is regulated as follows. Cobalt uptake is inhibited by uncouplers (CCCP and 3,5-di-tert-butyl-4-hydroxybenzylidenemalononitrile) and by the addition of excess nickel. In terms of biological role, mediates energy-dependent uptake of cobalt ions into the cell. Can also transport nickel ions, but cobalt is the preferred substrate. The chain is Cobalt transport protein NhlF (nhlF) from Rhodococcus rhodochrous.